Consider the following 664-residue polypeptide: Frizzled-3 (664 aa).

The signal sequence occupies residues 1-16 (MAAYLISFIWVSVILA). Topologically, residues 17-204 (QKSMGHSLFA…REELSFARYF (188 aa)) are extracellular. The FZ domain maps to 22–135 (HSLFACEPIT…CSRFPDCDEP (114 aa)). 5 disulfide bridges follow: Cys-27-Cys-88, Cys-35-Cys-81, Cys-72-Cys-109, Cys-98-Cys-132, and Cys-102-Cys-126. Asn-41 carries N-linked (GlcNAc...) asparagine glycosylation. A helical membrane pass occupies residues 205 to 225 (IGVISIVCLSATLFTFLTFLI). Topologically, residues 226-236 (DVTRFRYPERP) are cytoplasmic. Residues 237–257 (IIFYAVCYMMVSLIFFIGFLL) traverse the membrane as a helical segment. At 258-287 (EDKVACNGANPSQYKASTVTQGSHNKACTM) the chain is on the extracellular side. Residues 288–308 (LFMVLYFFTMAGSVWWVILTI) traverse the membrane as a helical segment. Topologically, residues 309–327 (TWFLAAVPKWGSEAIEKKA) are cytoplasmic. A helical transmembrane segment spans residues 328–348 (LLFHASAWGIPGTLTIILLAM). Residues 349 to 373 (NKIEGDNISGVCFVGLYDVHALRYF) lie on the Extracellular side of the membrane. A glycan (N-linked (GlcNAc...) asparagine) is linked at Asn-355. Residues 374-394 (VLAPLCLDVVVGVSLLLAGII) traverse the membrane as a helical segment. Residues 395 to 419 (SLNRVRIEIPLEKENQDKLVKFMIR) are Cytoplasmic-facing. Residues 420-440 (IGVFSILYLVPLLVVIGCYFY) form a helical membrane-spanning segment. Residues 441–476 (EQAYRGVWETTWVQERCREYHIPCPYKVTQTSRPDL) are Extracellular-facing. Residues 477-497 (ILFLMKYLMLLVVGIPSVFWV) form a helical membrane-spanning segment. Residues 498-664 (GSKKTCFEWA…RVIEADATSA (167 aa)) lie on the Cytoplasmic side of the membrane. The short motif at 501–506 (KTCFEW) is the Lys-Thr-X-X-X-Trp motif, mediates interaction with the PDZ domain of Dvl family members element. The tract at residues 537 to 664 (RDPNTPIVRK…RVIEADATSA (128 aa)) is disordered. Polar residues-rich tracts occupy residues 549 to 564 (GTSTQGTSTHASSTQL) and 573 to 585 (KAGSVQSKVSSYH).

It belongs to the G-protein coupled receptor Fz/Smo family. As to expression, expression restricted to the early nervous system.

Its subcellular location is the membrane. It localises to the cell membrane. The protein localises to the cell surface. It is found in the apical cell membrane. Its function is as follows. Receptor for Wnt proteins. Most of frizzled receptors are coupled to the beta-catenin canonical signaling pathway, which leads to the activation of disheveled proteins, inhibition of GSK-3 kinase, nuclear accumulation of beta-catenin and activation of Wnt target genes. A second signaling pathway involving PKC and calcium fluxes has been seen for some family members, but it is not yet clear if it represents a distinct pathway or if it can be integrated in the canonical pathway, as PKC seems to be required for Wnt-mediated inactivation of GSK-3 kinase. Both pathways seem to involve interactions with G-proteins. Activated by Wnt8. Involved in transduction and intercellular transmission of polarity information during tissue morphogenesis and/or in differentiated tissues. Plays a role in controlling early axon growth and guidance processes necessary for the formation of a subset of central and peripheral major fiber tracts. Involved in the migration of cranial neural crest cells. May also be implicated in the transmission of sensory information from the trunk and limbs to the brain. Controls commissural sensory axons guidance after midline crossing along the anterior-posterior axis in the developing spinal cord in a Wnt-dependent signaling pathway. Together with FZD6, is involved in the neural tube closure and plays a role in the regulation of the establishment of planar cell polarity (PCP). Promotes neurogenesis by maintaining sympathetic neuroblasts within the cell cycle in a beta-catenin-dependent manner. This chain is Frizzled-3 (fzd3), found in Xenopus laevis (African clawed frog).